A 241-amino-acid chain; its full sequence is Small ribosomal subunit protein uS2 (241 aa).

The protein belongs to the universal ribosomal protein uS2 family.

This Salmonella choleraesuis (strain SC-B67) protein is Small ribosomal subunit protein uS2.